A 383-amino-acid chain; its full sequence is Embryonic pepsinogen (383 aa).

The first 16 residues, 1–16, serve as a signal peptide directing secretion; it reads MRSLALLCAVLALSDG. In terms of domain architecture, Peptidase A1 spans 76–380; that stretch reads YYGTISIGTP…DRANNRVGLA (305 aa). Aspartate 94 is an active-site residue. Cysteine 107 and cysteine 112 are oxidised to a cystine. Asparagine 132 and asparagine 204 each carry an N-linked (GlcNAc...) asparagine glycan. A disulfide bridge connects residues cysteine 267 and cysteine 271. Aspartate 276 is a catalytic residue. Asparagine 309 is a glycosylation site (N-linked (GlcNAc...) asparagine). Cysteine 310 and cysteine 344 form a disulfide bridge. N-linked (GlcNAc...) asparagine glycosylation occurs at asparagine 350.

The protein belongs to the peptidase A1 family.

The chain is Embryonic pepsinogen from Gallus gallus (Chicken).